The chain runs to 262 residues: Type III pantothenate kinase (262 aa).

12-19 is a binding site for ATP; the sequence is DIGNTSIA. Residues Tyr94 and 109 to 112 contribute to the substrate site; that span reads GSDV. Asp111 (proton acceptor) is an active-site residue. Asp132 lines the K(+) pocket. An ATP-binding site is contributed by Thr135. Residue Thr187 coordinates substrate.

It belongs to the type III pantothenate kinase family. In terms of assembly, homodimer. NH4(+) is required as a cofactor. The cofactor is K(+).

It is found in the cytoplasm. It carries out the reaction (R)-pantothenate + ATP = (R)-4'-phosphopantothenate + ADP + H(+). The protein operates within cofactor biosynthesis; coenzyme A biosynthesis; CoA from (R)-pantothenate: step 1/5. In terms of biological role, catalyzes the phosphorylation of pantothenate (Pan), the first step in CoA biosynthesis. The sequence is that of Type III pantothenate kinase from Borreliella burgdorferi (strain ATCC 35210 / DSM 4680 / CIP 102532 / B31) (Borrelia burgdorferi).